A 226-amino-acid polypeptide reads, in one-letter code: Late protein I226R (226 aa).

An N-terminal signal peptide occupies residues 1–16 (MKMETFLVCLFHNAKG). N164 carries N-linked (GlcNAc...) asparagine; by host glycosylation.

The protein belongs to the asfivirus I226R family.

Plays a role in the inhibition of host NF-kappa-B and IRF3 signaling pathways. Mechanistically, promotes the degradation of host IKBKG through enhancing its ubiquitination leading to inhibition of both pathways. This is Late protein I226R from Ornithodoros (relapsing fever ticks).